Consider the following 224-residue polypeptide: uncharacterized protein (224 aa).

Residues 1 to 23 (MKKLLAAGIIGLLTVSIASPSFA) form the signal peptide. Residues 31-224 (NVAVLFDGSG…WEKEAQKFTE (194 aa)) enclose the VWFA domain.

The protein to B.subtilis YwmC.

This is an uncharacterized protein from Bacillus subtilis (strain 168).